The primary structure comprises 357 residues: Quinolinate synthase (357 aa).

Iminosuccinate-binding residues include His50 and Ser71. Residue Cys116 coordinates [4Fe-4S] cluster. Residues Tyr142 to Asn144 and Ser159 contribute to the iminosuccinate site. Residue Cys203 coordinates [4Fe-4S] cluster. Residues His229 to Glu231 and Thr246 each bind iminosuccinate. Cys300 contacts [4Fe-4S] cluster.

It belongs to the quinolinate synthase family. Type 1 subfamily. Requires [4Fe-4S] cluster as cofactor.

It is found in the cytoplasm. It carries out the reaction iminosuccinate + dihydroxyacetone phosphate = quinolinate + phosphate + 2 H2O + H(+). The protein operates within cofactor biosynthesis; NAD(+) biosynthesis; quinolinate from iminoaspartate: step 1/1. Catalyzes the condensation of iminoaspartate with dihydroxyacetone phosphate to form quinolinate. In Shewanella sp. (strain ANA-3), this protein is Quinolinate synthase.